Consider the following 1499-residue polypeptide: ABC multidrug transporter A-2 (1499 aa).

2 disordered regions span residues 1–66 (MAMQ…IDQE) and 80–107 (QISQ…NSDK). A compositionally biased stretch (polar residues) spans 16-30 (ISSSAGQEVASTIRR). Residues 31–51 (QFTDADADRIVETPLGEKADS) are compositionally biased toward basic and acidic residues. Polar residues predominate over residues 80–94 (QISQKSAGPTNTFLD). Residues 166-415 (LRSILGCRNR…FIDMGFDCPD (250 aa)) form the ABC transporter 1 domain. N-linked (GlcNAc...) asparagine glycosylation is present at Asn339. 5 consecutive transmembrane segments (helical) span residues 526–546 (MTLA…SVFY), 561–581 (LLFF…LTLW), 606–626 (MIVD…ILYF), 635–655 (GHFF…SNIF), and 669–689 (MVPS…TIPV). Asn763 carries an N-linked (GlcNAc...) asparagine glycan. A helical transmembrane segment spans residues 778-798 (GIILGFFFFFLAAYIICSELV). Positions 857-1100 (FHWQDVCYDI…LIKYFENKGS (244 aa)) constitute an ABC transporter 2 domain. Residue 893 to 900 (GVTGAGKT) coordinates ATP. The next 5 membrane-spanning stretches (helical) occupy residues 1193–1213 (YIYS…FTFW), 1227–1247 (FAIF…MPYF), 1268–1288 (AFML…AVPA), 1317–1337 (LLIL…IAGI), and 1353–1373 (LCLI…FWIF). N-linked (GlcNAc...) asparagine glycosylation is present at Asn1414. Residues 1466–1486 (GLLFVYIVFNIFAAIFLYWLI) form a helical membrane-spanning segment.

It belongs to the ABC transporter superfamily. ABCG family. PDR (TC 3.A.1.205) subfamily.

It is found in the cell membrane. It catalyses the reaction itraconazole(in) + ATP + H2O = itraconazole(out) + ADP + phosphate + H(+). The enzyme catalyses voriconazole(in) + ATP + H2O = voriconazole(out) + ADP + phosphate + H(+). With respect to regulation, the efflux inhibitor FK506 impairs the transport activity. Its function is as follows. Pleiotropic ABC efflux transporter that confers resistance to structurally and functionally unrelated compounds including azoles such as itraconazole, posaconazole, and voriconazole. The polypeptide is ABC multidrug transporter A-2 (Aspergillus fumigatus (strain ATCC MYA-4609 / CBS 101355 / FGSC A1100 / Af293) (Neosartorya fumigata)).